A 2555-amino-acid chain; its full sequence is Squalestatin hexaketide synthase clz14 (2555 aa).

The tract at residues 1–84 is disordered; sequence MDVSKEAGHH…PNATSTTTTT (84 aa). Low complexity predominate over residues 10–84; it reads HANGFANGNT…PNATSTTTTT (75 aa). One can recognise a Ketosynthase family 3 (KS3) domain in the interval 91 to 511; sequence QVPVAICGIG…GSNTHIIIDS (421 aa). Active-site for beta-ketoacyl synthase activity residues include cysteine 261, histidine 398, and histidine 435. Positions 611 to 928 are malonyl-CoA:ACP transacylase (MAT) domain; that stretch reads FIFTGQGAQW…LEGIGKLFCF (318 aa). An N-terminal hotdog fold region spans residues 975 to 1104; sequence HELLGERSLE…GLVTASVVTS (130 aa). The tract at residues 975 to 1256 is dehydratase (DH) domain; it reads HELLGERSLE…RGFKCKKTDD (282 aa). The region spanning 975-1260 is the PKS/mFAS DH domain; sequence HELLGERSLE…CKKTDDAFIQ (286 aa). The active-site Proton acceptor; for dehydratase activity is the histidine 1007. The C-terminal hotdog fold stretch occupies residues 1117–1260; it reads SRKVDTSRWY…CKKTDDAFIQ (144 aa). The active-site Proton donor; for dehydratase activity is the aspartate 1177. The tract at residues 1424–1595 is methyltransferase (CMet) domain; that stretch reads SFFQAAGLNK…GFEGAGTVVL (172 aa). The segment at 1821-2141 is enoyl reductase (ER) (ER) domain; that stretch reads GMLNTLHWVG…RGVHMGRIVV (321 aa). Residues 2165 to 2338 are ketoreductase (KR) domain; sequence STYLLTGGMG…PASVIDIAAI (174 aa). In terms of domain architecture, Carrier spans 2468–2546; that stretch reads IIFAQEIAKR…SLGRLATKRL (79 aa). Serine 2505 carries the O-(pantetheine 4'-phosphoryl)serine modification.

It participates in secondary metabolite biosynthesis. Functionally, highly reducing polyketide synthase (HR-PKS); part of the gene cluster that mediates the biosynthesis of squalestatin S1 (SQS1, also known as zaragozic acid A), a heavily oxidized fungal polyketide that offers potent cholesterol lowering activity by targeting squalene synthase (SS). SQS1 is composed of a 2,8-dioxobicyclic[3.2.1]octane-3,4,5-tricarboxyclic acid core that is connected to two lipophilic polyketide arms. These initial steps feature the priming of an unusual benzoic acid starter unit onto the highly reducing polyketide synthase clz14, followed by oxaloacetate extension and product release to generate a tricarboxylic acid containing product. The phenylalanine ammonia lyase (PAL) clz10 and the acyl-CoA ligase clz12 are involved in transforming phenylalanine into benzoyl-CoA. The citrate synthase-like protein clz17 is involved in connecting the C-alpha-carbons of the hexaketide chain and oxaloacetate to afford the tricarboxylic acid unit. The potential hydrolytic enzymes, clz11 and clz13, are in close proximity to pks2 and may participate in product release. On the other side, the tetraketide arm is synthesized by a the squalestatin tetraketide synthase clz2 and enzymatically esterified to the core in the last biosynthetic step, by the acetyltransferase clz6. The biosynthesis of the tetraketide must involve 3 rounds of chain extension. After the first and second rounds methyl-transfer occurs, and in all rounds of extension the ketoreductase and dehydratase are active. The enoyl reductase and C-MeT of clz2 are not active in the final round of extension. The acetyltransferase clz6 appears to have a broad substrate selectivity for its acyl CoA substrate, allowing the in vitro synthesis of novel squalestatins. The biosynthesis of SQS1 requires several oxidative steps likely performed by oxidoreductases clz3, clz15 and clz16. Finally, in support of the identification of the cluster as being responsible for SQS1 production, the cluster contains a gene encoding a putative squalene synthase (SS) clz20, suggesting a likely mechanism for self-resistance. The protein is Squalestatin hexaketide synthase clz14 of Cochliobolus lunatus (Filamentous fungus).